The chain runs to 185 residues: MINEIRKDAETRMDKCVESFKGNISKIRTGRAHPNLLDGIQVEYYGTATPLRQLANIVAEDSRTLALTVFDRSMSGAIEKAILTSDLGLNPASAGTVIRVPLPPLTEERRKDLIKLVRSEAESGRVSVRNVRRDANDKVKALLKDKEISEDEDRKSQEEIQKITDLMIKKIDAALADKEKELMDF.

The protein belongs to the RRF family.

Its subcellular location is the cytoplasm. Functionally, responsible for the release of ribosomes from messenger RNA at the termination of protein biosynthesis. May increase the efficiency of translation by recycling ribosomes from one round of translation to another. This Edwardsiella ictaluri (strain 93-146) protein is Ribosome-recycling factor.